The following is a 413-amino-acid chain: Protein cycle (413 aa).

A disordered region spans residues 1-43 (MEVQEFCENMEEIEDENYDEEKSARTSDENRKQNHSEIEKRRR). Positions 8–19 (ENMEEIEDENYD) are enriched in acidic residues. The segment covering 20–41 (EEKSARTSDENRKQNHSEIEKR) has biased composition (basic and acidic residues). Residues 30–83 (NRKQNHSEIEKRRRDKMNTYINELSSMIPMCFAMQRKLDKLTVLRMAVQHLRGI) enclose the bHLH domain. The 72-residue stretch at 104–175 (DQELKMIILQ…EQLSSLEQCP (72 aa)) folds into the PAS 1 domain. The segment at 219–242 (NQIKEESDTSSSSRSSTKRKSRLT) is disordered. Positions 297-367 (PASLDNHPNI…ESHKMVMQVP (71 aa)) constitute a PAS 2 domain. The PAC domain occupies 372 to 413 (TQVYRFRCKDNSYIQLQSEWRAFKNPWTSEIDYIIAKNSVFL).

In terms of assembly, efficient DNA binding requires dimerization with another bHLH protein. Forms a heterodimer with Clock in order to activate PER and TIM transcription. In terms of tissue distribution, expressed in head and ovary.

The protein localises to the nucleus. Its function is as follows. Putative transcription factor involved in the generation of biological rhythms. Activates cycling transcription of Period (PER) and Timeless (TIM) by binding to the E-box (5'-CACGTG-3') present in their promoters. The polypeptide is Protein cycle (cyc) (Drosophila melanogaster (Fruit fly)).